We begin with the raw amino-acid sequence, 790 residues long: Nuclear cap-binding protein subunit 1 (790 aa).

Residues 1-26 form a disordered region; sequence MSRRRHSYENDGGQPHKRRKTSDANE. Positions 3 to 20 match the Nuclear localization signal motif; sequence RRRHSYENDGGQPHKRRK. Serine 7 is modified (phosphoserine). The residue at position 21 (threonine 21) is a Phosphothreonine. Serine 22 and serine 201 each carry phosphoserine. Residues 28–240 form the MIF4G domain; it reads EDHLESLICK…CLWAQIQKLK (213 aa). At lysine 204 the chain carries N6-acetyllysine. Residues 643–713 adopt a coiled-coil conformation; it reads STIRKMNKHV…SEQKNLFLVI (71 aa). A Glycyl lysine isopeptide (Lys-Gly) (interchain with G-Cter in SUMO2) cross-link involves residue lysine 684. Lysine 698 bears the N6-acetyllysine mark.

The protein belongs to the NCBP1 family. Component of the nuclear cap-binding complex (CBC), a heterodimer composed of NCBP1/CBP80 and NCBP2/CBP20 that interacts with m7GpppG-capped RNA. Found in a U snRNA export complex containing PHAX/RNUXA, NCBP1/CBP80, NCBP2/CBP20, RAN, XPO1 and m7G-capped RNA. Identified in a IGF2BP1-dependent mRNP granule complex containing untranslated mRNAs. Interacts with PHAX/RNUXA, SRRT/ARS2, EIF4G2, IGF2BP1, HNRNPF, HNRNPH1, KIAA0427/CTIF, PARN, DROSHA, UPF1 and ALYREF/THOC4. May interact with EIF4G1; the interaction is however controversial since it is reported by, and, but is not observed by. The large PER complex involved in the repression of transcriptional termination is composed of at least PER2, CDK9, DDX5, DHX9, NCBP1/CBP80 and POLR2A. Component of an alternative nuclear cap-binding complex (CBC) composed of NCBP1/CBP80 and NCBP3. Interacts with METTL3. Interacts with ZFC3H1 in a RNase-insensitive manner. Interacts with MTREX. Interacts with TASOR. Interacts with DHX34; the interaction is RNA-dependent. Interacts with KPNA3. Dephosphorylated at Thr-21 by the PNUTS-PP1 complex during RNA polymerase II transcription pause-release.

It localises to the nucleus. The protein resides in the cytoplasm. Its function is as follows. Component of the cap-binding complex (CBC), which binds cotranscriptionally to the 5'-cap of pre-mRNAs and is involved in various processes such as pre-mRNA splicing, translation regulation, nonsense-mediated mRNA decay, RNA-mediated gene silencing (RNAi) by microRNAs (miRNAs) and mRNA export. The CBC complex is involved in mRNA export from the nucleus via its interaction with ALYREF/THOC4/ALY, leading to the recruitment of the mRNA export machinery to the 5'-end of mRNA and to mRNA export in a 5' to 3' direction through the nuclear pore. The CBC complex is also involved in mediating U snRNA and intronless mRNAs export from the nucleus. The CBC complex is essential for a pioneer round of mRNA translation, before steady state translation when the CBC complex is replaced by cytoplasmic cap-binding protein eIF4E. The pioneer round of mRNA translation mediated by the CBC complex plays a central role in nonsense-mediated mRNA decay (NMD), NMD only taking place in mRNAs bound to the CBC complex, but not on eIF4E-bound mRNAs. The CBC complex enhances NMD in mRNAs containing at least one exon-junction complex (EJC) via its interaction with UPF1, promoting the interaction between UPF1 and UPF2. The CBC complex is also involved in 'failsafe' NMD, which is independent of the EJC complex, while it does not participate in Staufen-mediated mRNA decay (SMD). During cell proliferation, the CBC complex is also involved in microRNAs (miRNAs) biogenesis via its interaction with SRRT/ARS2 and is required for miRNA-mediated RNA interference. The CBC complex also acts as a negative regulator of PARN, thereby acting as an inhibitor of mRNA deadenylation. In the CBC complex, NCBP1/CBP80 does not bind directly capped RNAs (m7GpppG-capped RNA) but is required to stabilize the movement of the N-terminal loop of NCBP2/CBP20 and lock the CBC into a high affinity cap-binding state with the cap structure. Associates with NCBP3 to form an alternative cap-binding complex (CBC) which plays a key role in mRNA export and is particularly important in cellular stress situations such as virus infections. The conventional CBC with NCBP2 binds both small nuclear RNA (snRNA) and messenger (mRNA) and is involved in their export from the nucleus whereas the alternative CBC with NCBP3 does not bind snRNA and associates only with mRNA thereby playing a role only in mRNA export. NCBP1/CBP80 is required for cell growth and viability. The chain is Nuclear cap-binding protein subunit 1 (Ncbp1) from Rattus norvegicus (Rat).